Here is a 444-residue protein sequence, read N- to C-terminus: Multidrug resistance protein MdtA (444 aa).

The N-terminal stretch at 1-20 (MKSQSKRTSRLFVFVGVVVA) is a signal peptide. The segment covering 37–52 (NNTSGAQQSARGQDTS) has biased composition (polar residues). Disordered regions lie at residues 37–60 (NNTS…RNTP) and 398–444 (TPRS…AEKS). The segment covering 406 to 419 (ANPASAEKAAAEAE) has biased composition (low complexity). Positions 435–444 (ARSTTAAEKS) are enriched in polar residues.

The protein belongs to the membrane fusion protein (MFP) (TC 8.A.1) family. As to quaternary structure, part of a tripartite efflux system composed of MdtA, MdtB and MdtC.

The protein resides in the cell inner membrane. The protein is Multidrug resistance protein MdtA of Yersinia pestis bv. Antiqua (strain Antiqua).